A 95-amino-acid chain; its full sequence is UPF0358 protein GTNG_0942 (95 aa).

This sequence belongs to the UPF0358 family.

This Geobacillus thermodenitrificans (strain NG80-2) protein is UPF0358 protein GTNG_0942.